Consider the following 313-residue polypeptide: Ribosomal RNA small subunit methyltransferase H (313 aa).

S-adenosyl-L-methionine-binding positions include 35–37, Asp-55, Phe-79, Asp-101, and Gln-108; that span reads GGH. The segment at 276–300 is disordered; that stretch reads QGGPTLKSVGKMMPPDDEVADNPRA.

This sequence belongs to the methyltransferase superfamily. RsmH family.

The protein localises to the cytoplasm. The catalysed reaction is cytidine(1402) in 16S rRNA + S-adenosyl-L-methionine = N(4)-methylcytidine(1402) in 16S rRNA + S-adenosyl-L-homocysteine + H(+). Functionally, specifically methylates the N4 position of cytidine in position 1402 (C1402) of 16S rRNA. In Dickeya chrysanthemi (strain Ech1591) (Dickeya zeae (strain Ech1591)), this protein is Ribosomal RNA small subunit methyltransferase H.